Consider the following 651-residue polypeptide: MSPVAKVSEFHREGNDWFCKTGLSSDITVVVDDVKFHLHKFPLVSKCGKLARMYEDSKSTDKQSLWTTVLEEFPGGADNFLIVARFCYGARVDITSKNLVSIHCAAEYLEMTNEYGEDNLISQVETFLHKHVLRNWKDCILALQSSSPVLKSAEKLQMIPKLMNAVSTMVCTDPSLFGWPMMMYGTLQSPGGSILWNGINTGARMRSSGSDWWYEDISYLSVDLFKRLIKTMETKGIRAESLAGAMMYYARKYLPGLGRWQSGTSDSSKSRRRVVSFNLAKASSPSSMPPLDQIALLETILSLLPEKRGRSFCKFLLGLLRVAFILGVDGNCVKKLEKRIGMQLELATLDNLLILNYSDSETLYNVDCVERIVRHFVSSLSSSSSQLPEFSPPSLDPVTSPSPAPLKKVANLVDSYMAEVASDVNLKPDKMRSLAAALPESSRPLYDGLYRAFDIYFKEHPWLSDRDKEQLCNIMDYQRLSIDACAHASHNDRLPLRVVLQVLFFEQMHLRTALAGGLNVANTETAHAVTIPGGRTGQEIVQRDGWVTVVRQNQVLKVDMQKMRSRVGELEEEFQSIKQEMKKRVSKSSSSMSSPRLVKLGCKFLLPRASDAKNDTVQNSVSSTPRSATADHTLPRSSRHSKHRKSFSFFG.

One can recognise a BTB domain in the interval 25-96 (SDITVVVDDV…CYGARVDITS (72 aa)). The region spanning 211-509 (DWWYEDISYL…LQVLFFEQMH (299 aa)) is the NPH3 domain. The interval 611–651 (DAKNDTVQNSVSSTPRSATADHTLPRSSRHSKHRKSFSFFG) is disordered. The span at 615–627 (DTVQNSVSSTPRS) shows a compositional bias: polar residues. Positions 637-651 (SSRHSKHRKSFSFFG) are enriched in basic residues.

It belongs to the NPH3 family.

It functions in the pathway protein modification; protein ubiquitination. May act as a substrate-specific adapter of an E3 ubiquitin-protein ligase complex (CUL3-RBX1-BTB) which mediates the ubiquitination and subsequent proteasomal degradation of target proteins. The protein is BTB/POZ domain-containing protein At3g44820 of Arabidopsis thaliana (Mouse-ear cress).